The following is an 861-amino-acid chain: Piwi-like protein 1 (861 aa).

Positions 1–13 are enriched in basic residues; it reads MTGRARARARGRA. The segment at 1-64 is disordered; it reads MTGRARARAR…TAGGTAKSQG (64 aa). At Arg-14 the chain carries Omega-N-methylarginine; by PRMT5; alternate. Arg-14 is modified (symmetric dimethylarginine; by PRMT5; alternate). The segment covering 17 to 27 has biased composition (polar residues); sequence ETAQLVGSTAS. An Omega-N-methylarginine; by PRMT5 modification is found at Arg-49. Residue Arg-53 is modified to Omega-N-methylarginine; alternate. Residue Arg-53 is modified to Symmetric dimethylarginine; alternate. The D-box signature appears at 217–224; the sequence is RRLLKIMN. The 114-residue stretch at 278–391 folds into the PAZ domain; that stretch reads TVLDFMFNFY…LIPELCYLTG (114 aa). The segment at 316 to 318 is required for binding 2'-O-methylated 3'-end of piRNAs; sequence TYR. Arg-370 is subject to Omega-N-methylarginine; by PRMT5. The segment at 479–615 is MID region; the sequence is SKETRGAPLI…LQMNCKMGGE (137 aa). Residues 555–847 form the Piwi domain; that stretch reads IVVCLLSSNR…LAFLVGQSIH (293 aa). Active-site residues include Asp-632, Glu-670, Asp-702, and His-836.

It belongs to the argonaute family. Piwi subfamily. As to quaternary structure, interacts (via Piwi domain) with DICER1, suggesting that it forms ribonucleoprotein RISC complexes; this interaction is regulated by HSP90AB1 activity. Interacts with MAEL, KIF17, PABPC1, PRMT5 and WDR77. Interacts (when methylated on arginine residues) with TDRD1, TDRKH/TDRD2, RNF17/TDRD4, TDRD6, TDRD7 and TDRD9. Interacts with CLOCK. Interacts with MOV10L1. Interacts with ANAPC10; interaction oly takes place following piRNA-binding. Interacts with RNF8; leading to sequester RNF8 in the cytoplasm. Interacts with TEX19. Mg(2+) serves as cofactor. Post-translationally, arginine methylation by PRMT5 is required for the interaction with Tudor domain-containing protein (TDRD1, TDRKH/TDRD2, RNF17/TDRD4, TDRD6, TDRD7 and TDRD9) and subsequent localization to the meiotic nuage, also named P granule. Ubiquitinated by the anaphase promoting complex/cyclosome (APC/C) in late spermatids, leading to its degradation. Ubiquitination only takes place following piRNA-binding in adult testis. Ubiquitination and degradation in late spermatogenesis by APC/C is probably required to release RNF8 from the cytoplasm and promote histone to protamine exchange by RNF8. In terms of tissue distribution, expressed in spermatocytes and spermatids. Also detected in prostate cancer (at protein level). Detected in most fetal and adult tissues. Expressed in testes, specifically in germline cells; detected in spermatocytes and spermatids during spermatogenesis. Increased expression in testicular tumors originating from embryonic germ cells with retention of germ cells phenotype. No expression in testicular tumors of somatic origin, such as Sertoli cell and Leydig cell tumors. Overexpressed in gastric cancer cells. Isoform 3: Ubiquitously expressed, and specifically in CD34(+) hematopoietic progenitor cells but not in more differentiated cells.

The protein localises to the cytoplasm. Its function is as follows. Endoribonuclease that plays a central role in postnatal germ cells by repressing transposable elements and preventing their mobilization, which is essential for the germline integrity. Acts via the piRNA metabolic process, which mediates the repression of transposable elements during meiosis by forming complexes composed of piRNAs and Piwi proteins and governs the methylation and subsequent repression of transposons. Directly binds methylated piRNAs, a class of 24 to 30 nucleotide RNAs that are generated by a Dicer-independent mechanism and are primarily derived from transposons and other repeated sequence elements. Strongly prefers a uridine in the first position of their guide (g1U preference, also named 1U-bias). Not involved in the piRNA amplification loop, also named ping-pong amplification cycle. Acts as an endoribonuclease that cleaves transposon messenger RNAs. Besides their function in transposable elements repression, piRNAs are probably involved in other processes during meiosis such as translation regulation. Probable component of some RISC complex, which mediates RNA cleavage and translational silencing. Also plays a role in the formation of chromatoid bodies and is required for some miRNAs stability. Required to sequester RNF8 in the cytoplasm until late spermatogenesis; RNF8 being released upon ubiquitination and degradation of PIWIL1. May be a negative developmental regulator. This Homo sapiens (Human) protein is Piwi-like protein 1 (PIWIL1).